Reading from the N-terminus, the 686-residue chain is Methionine--tRNA ligase (686 aa).

A 'HIGH' region motif is present at residues 15–25; it reads PYANGSIHLGH. Cys-146, Cys-149, Cys-159, and Cys-162 together coordinate Zn(2+). The 'KMSKS' region motif lies at 332–336; that stretch reads KMSKS. Lys-335 lines the ATP pocket. The region spanning 585–686 is the tRNA-binding domain; it reads AFAAVDMRIA…EGAQPGMRVM (102 aa).

The protein belongs to the class-I aminoacyl-tRNA synthetase family. MetG type 1 subfamily. In terms of assembly, homodimer. Zn(2+) serves as cofactor.

The protein localises to the cytoplasm. The enzyme catalyses tRNA(Met) + L-methionine + ATP = L-methionyl-tRNA(Met) + AMP + diphosphate. Functionally, is required not only for elongation of protein synthesis but also for the initiation of all mRNA translation through initiator tRNA(fMet) aminoacylation. This Vibrio campbellii (strain ATCC BAA-1116) protein is Methionine--tRNA ligase.